A 107-amino-acid chain; its full sequence is uncharacterized protein (107 aa).

Residues 62 to 79 (LLVVIVYYFSHVGSFSLA) traverse the membrane as a helical segment.

It localises to the nucleus membrane. This is an uncharacterized protein from Schizosaccharomyces pombe (strain 972 / ATCC 24843) (Fission yeast).